Reading from the N-terminus, the 423-residue chain is Carboxypeptidase B2 (423 aa).

The N-terminal stretch at 1–22 (MKLYSLGVLVATVLFCGEHAFA) is a signal peptide. Residues 23-114 (FQRGQVLSAL…QTSNDTISPR (92 aa)) constitute a propeptide, activation peptide. 4 N-linked (GlcNAc...) asparagine glycosylation sites follow: asparagine 44, asparagine 73, asparagine 85, and asparagine 108. Positions 122–419 (QYHSLNEIYS…VAVAKIASHV (298 aa)) constitute a Peptidase M14 domain. The cysteines at positions 178 and 191 are disulfide-linked. Residues histidine 181 and glutamate 184 each contribute to the Zn(2+) site. Substrate contacts are provided by residues 181–184 (HARE) and arginine 239. N-linked (GlcNAc...) asparagine glycosylation is present at asparagine 241. 2 cysteine pairs are disulfide-bonded: cysteine 250–cysteine 274 and cysteine 265–cysteine 279. 256 to 257 (NR) contributes to the substrate binding site. Histidine 310 serves as a coordination point for Zn(2+). Residues 311–312 (SY) and tyrosine 363 contribute to the substrate site. The active-site Proton donor/acceptor is the glutamate 385.

The protein belongs to the peptidase M14 family. The cofactor is Zn(2+).

It localises to the secreted. The enzyme catalyses Release of C-terminal Arg and Lys from a polypeptide.. Its activity is regulated as follows. TAFI/CPB2 is unique among carboxypeptidases in that it spontaneously inactivates with a short half-life, a property that is crucial for its role in controlling blood clot lysis. The zymogen is stabilized by interactions with the activation peptide. Release of the activation peptide increases a dynamic flap mobility and in time this leads to conformational changes that disrupt the catalytic site and expose a cryptic thrombin-cleavage site present at Arg-324. Functionally, cleaves C-terminal arginine or lysine residues from biologically active peptides such as kinins or anaphylatoxins in the circulation thereby regulating their activities. Down-regulates fibrinolysis by removing C-terminal lysine residues from fibrin that has already been partially degraded by plasmin. The chain is Carboxypeptidase B2 (CPB2) from Bos taurus (Bovine).